Consider the following 362-residue polypeptide: Olfactory receptor 5AU1 (362 aa).

The Extracellular segment spans residues Met-1–Phe-79. N-linked (GlcNAc...) asparagine glycosylation occurs at Asn-56. The chain crosses the membrane as a helical span at residues Val-80 to Ile-100. The Cytoplasmic segment spans residues His-101 to Ser-116. Residues Leu-117–Lys-139 form a helical membrane-spanning segment. At Arg-140–Thr-150 the chain is on the extracellular side. Cys-148 and Cys-230 are oxidised to a cystine. Residues Gln-151–Tyr-171 form a helical membrane-spanning segment. Residues Asp-172 to Ser-194 lie on the Cytoplasmic side of the membrane. A helical transmembrane segment spans residues Leu-195–Phe-215. At Ser-216–Glu-247 the chain is on the extracellular side. A helical membrane pass occupies residues Ile-248 to Ser-268. The Cytoplasmic segment spans residues Tyr-269–Ser-290. The helical transmembrane segment at Thr-291–Leu-311 threads the bilayer. Residues Arg-312 to Asp-322 lie on the Extracellular side of the membrane. Residues Arg-323–Leu-343 traverse the membrane as a helical segment. Residues Arg-344–Glu-362 lie on the Cytoplasmic side of the membrane.

This sequence belongs to the G-protein coupled receptor 1 family.

It localises to the cell membrane. Odorant receptor. This is Olfactory receptor 5AU1 (OR5AU1) from Homo sapiens (Human).